We begin with the raw amino-acid sequence, 673 residues long: Beta-galactosidase 8 (673 aa).

The first 20 residues, 1-20 (MGPSRSFQNLLLLLLPLALA), serve as a signal peptide directing secretion. Asn-38 is a glycosylation site (N-linked (GlcNAc...) asparagine). The Proton donor role is filled by Glu-189. The N-linked (GlcNAc...) asparagine glycan is linked to Asn-230. The Nucleophile role is filled by Glu-272. 5 N-linked (GlcNAc...) asparagine glycosylation sites follow: Asn-304, Asn-329, Asn-401, Asn-489, and Asn-540.

Belongs to the glycosyl hydrolase 35 family.

It localises to the secreted. It is found in the extracellular space. The protein localises to the apoplast. It carries out the reaction Hydrolysis of terminal non-reducing beta-D-galactose residues in beta-D-galactosides.. This chain is Beta-galactosidase 8, found in Oryza sativa subsp. japonica (Rice).